A 239-amino-acid polypeptide reads, in one-letter code: LexA repressor (239 aa).

The H-T-H motif DNA-binding region spans 26-46 (FDEMKEALDLASKSGIHRLIT). The interval 90–110 (GSLGKTPPPPARPAPVATNDD) is disordered. Residues serine 160 and lysine 198 each act as for autocatalytic cleavage activity in the active site.

Belongs to the peptidase S24 family. In terms of assembly, homodimer.

It catalyses the reaction Hydrolysis of Ala-|-Gly bond in repressor LexA.. Functionally, represses a number of genes involved in the response to DNA damage (SOS response), including recA and lexA. In the presence of single-stranded DNA, RecA interacts with LexA causing an autocatalytic cleavage which disrupts the DNA-binding part of LexA, leading to derepression of the SOS regulon and eventually DNA repair. The protein is LexA repressor of Brucella anthropi (strain ATCC 49188 / DSM 6882 / CCUG 24695 / JCM 21032 / LMG 3331 / NBRC 15819 / NCTC 12168 / Alc 37) (Ochrobactrum anthropi).